Here is a 158-residue protein sequence, read N- to C-terminus: NAD(P)H-quinone oxidoreductase subunit J, chloroplastic (158 aa).

Belongs to the complex I 30 kDa subunit family. In terms of assembly, NDH is composed of at least 16 different subunits, 5 of which are encoded in the nucleus.

It localises to the plastid. It is found in the chloroplast thylakoid membrane. The enzyme catalyses a plastoquinone + NADH + (n+1) H(+)(in) = a plastoquinol + NAD(+) + n H(+)(out). It catalyses the reaction a plastoquinone + NADPH + (n+1) H(+)(in) = a plastoquinol + NADP(+) + n H(+)(out). NDH shuttles electrons from NAD(P)H:plastoquinone, via FMN and iron-sulfur (Fe-S) centers, to quinones in the photosynthetic chain and possibly in a chloroplast respiratory chain. The immediate electron acceptor for the enzyme in this species is believed to be plastoquinone. Couples the redox reaction to proton translocation, and thus conserves the redox energy in a proton gradient. The polypeptide is NAD(P)H-quinone oxidoreductase subunit J, chloroplastic (Lotus japonicus (Lotus corniculatus var. japonicus)).